Consider the following 425-residue polypeptide: Protein PTI1 (425 aa).

At Ser272 the chain carries Phosphoserine.

Component of the cleavage and polyadenylation factor (CPF) complex, which is composed of PTI1, SYC1, SSU72, GLC7, MPE1, REF2, PFS2, PTA1, YSH1/BRR5, SWD2, CFT2/YDH1, YTH1, CFT1/YHH1, FIP1 and PAP1. Component of the APT complex, which is a subcomplex of CPF, and is composed of PTI1, SYC1, SSU72, GLC7, REF2, PTA1 and SWD2.

The protein resides in the nucleus. Component of the cleavage and polyadenylation factor (CPF) complex, which plays a key role in polyadenylation-dependent pre-mRNA 3'-end formation and cooperates with cleavage factors including the CFIA complex and NAB4/CFIB. Component of the APT complex, which may be involved in polyadenylation-independent transcript 3'-end formation. PTI1 is required for 3'-end formation of snoRNAs. This Saccharomyces cerevisiae (strain ATCC 204508 / S288c) (Baker's yeast) protein is Protein PTI1 (PTI1).